A 226-amino-acid polypeptide reads, in one-letter code: Probable proteasome subunit beta type-1 (226 aa).

Positions 1 to 24 (MATTVKDTMNVDINAIKKGEIRMG) are cleaved as a propeptide — removed in mature form. T25 serves as the catalytic Nucleophile.

This sequence belongs to the peptidase T1B family. In terms of assembly, the 26S proteasome consists of a 20S proteasome core and two 19S regulatory subunits. The 20S proteasome core is composed of 28 subunits that are arranged in four stacked rings, resulting in a barrel-shaped structure. The two end rings are each formed by seven alpha subunits, and the two central rings are each formed by seven beta subunits. The catalytic chamber with the active sites is on the inside of the barrel.

The protein resides in the cytoplasm. It is found in the nucleus. It catalyses the reaction Cleavage of peptide bonds with very broad specificity.. Its function is as follows. The proteasome is a multicatalytic proteinase complex which is characterized by its ability to cleave peptides with Arg, Phe, Tyr, Leu, and Glu adjacent to the leaving group at neutral or slightly basic pH. The proteasome has an ATP-dependent proteolytic activity. This Schizosaccharomyces pombe (strain 972 / ATCC 24843) (Fission yeast) protein is Probable proteasome subunit beta type-1 (pre3).